A 565-amino-acid polypeptide reads, in one-letter code: Coiled-coil domain-containing protein 17 (565 aa).

The tract at residues Ile-58–Glu-87 is disordered. Coiled coils occupy residues Ala-97–Ala-160 and Leu-219–Ser-271.

This Mus musculus (Mouse) protein is Coiled-coil domain-containing protein 17 (Ccdc17).